A 148-amino-acid polypeptide reads, in one-letter code: Deoxyuridine 5'-triphosphate nucleotidohydrolase (148 aa).

Substrate contacts are provided by residues 67–69, Asn-80, 84–86, and Met-94; these read RSG and LID.

This sequence belongs to the dUTPase family. Requires Mg(2+) as cofactor.

It carries out the reaction dUTP + H2O = dUMP + diphosphate + H(+). It participates in pyrimidine metabolism; dUMP biosynthesis; dUMP from dCTP (dUTP route): step 2/2. In terms of biological role, this enzyme is involved in nucleotide metabolism: it produces dUMP, the immediate precursor of thymidine nucleotides and it decreases the intracellular concentration of dUTP so that uracil cannot be incorporated into DNA. This is Deoxyuridine 5'-triphosphate nucleotidohydrolase from Paraburkholderia phytofirmans (strain DSM 17436 / LMG 22146 / PsJN) (Burkholderia phytofirmans).